Reading from the N-terminus, the 403-residue chain is S-adenosylmethionine synthase (403 aa).

Residue H16 coordinates ATP. Residue D18 coordinates Mg(2+). E44 is a binding site for K(+). Residues E57 and Q100 each contribute to the L-methionine site. The flexible loop stretch occupies residues Q100 to R110. Residues Q106–L126 are disordered. Residues D176 to K178, K248 to F249, D257, R263 to K264, A280, and K284 each bind ATP. An L-methionine-binding site is contributed by D257. K288 lines the L-methionine pocket.

This sequence belongs to the AdoMet synthase family. In terms of assembly, homotetramer; dimer of dimers. Mg(2+) serves as cofactor. The cofactor is K(+).

Its subcellular location is the cytoplasm. It catalyses the reaction L-methionine + ATP + H2O = S-adenosyl-L-methionine + phosphate + diphosphate. It functions in the pathway amino-acid biosynthesis; S-adenosyl-L-methionine biosynthesis; S-adenosyl-L-methionine from L-methionine: step 1/1. Its function is as follows. Catalyzes the formation of S-adenosylmethionine (AdoMet) from methionine and ATP. The overall synthetic reaction is composed of two sequential steps, AdoMet formation and the subsequent tripolyphosphate hydrolysis which occurs prior to release of AdoMet from the enzyme. The polypeptide is S-adenosylmethionine synthase (Clavibacter michiganensis subsp. michiganensis (strain NCPPB 382)).